A 367-amino-acid chain; its full sequence is 1-deoxy-D-xylulose 5-phosphate reductoisomerase (367 aa).

NADPH is bound by residues threonine 10, glycine 11, serine 12, isoleucine 13, glycine 34, lysine 35, asparagine 36, and asparagine 112. Residue lysine 113 participates in 1-deoxy-D-xylulose 5-phosphate binding. Glutamate 114 contacts NADPH. Aspartate 138 lines the Mn(2+) pocket. Serine 139, glutamate 140, serine 164, and histidine 186 together coordinate 1-deoxy-D-xylulose 5-phosphate. Glutamate 140 lines the Mn(2+) pocket. An NADPH-binding site is contributed by glycine 192. 1-deoxy-D-xylulose 5-phosphate is bound by residues serine 199, asparagine 204, lysine 205, and glutamate 208. Mn(2+) is bound at residue glutamate 208.

It belongs to the DXR family. It depends on Mg(2+) as a cofactor. Requires Mn(2+) as cofactor.

It carries out the reaction 2-C-methyl-D-erythritol 4-phosphate + NADP(+) = 1-deoxy-D-xylulose 5-phosphate + NADPH + H(+). Its pathway is isoprenoid biosynthesis; isopentenyl diphosphate biosynthesis via DXP pathway; isopentenyl diphosphate from 1-deoxy-D-xylulose 5-phosphate: step 1/6. Its function is as follows. Catalyzes the NADPH-dependent rearrangement and reduction of 1-deoxy-D-xylulose-5-phosphate (DXP) to 2-C-methyl-D-erythritol 4-phosphate (MEP). This chain is 1-deoxy-D-xylulose 5-phosphate reductoisomerase, found in Thermus thermophilus (strain ATCC BAA-163 / DSM 7039 / HB27).